Reading from the N-terminus, the 459-residue chain is Alpha,alpha-trehalose-phosphate synthase [UDP-forming] (459 aa).

Positions 86 and 140 each coordinate D-glucose 6-phosphate. Positions 262 and 267 each coordinate UDP. UDP-alpha-D-glucose-binding residues include Arg-262 and Lys-267. Residue Arg-300 coordinates D-glucose 6-phosphate. Residue 361 to 369 (DGMNLVALE) participates in UDP-alpha-D-glucose binding. Position 365–369 (365–369 (LVALE)) interacts with UDP.

Belongs to the glycosyltransferase 20 family. Component of the trehalose synthase complex.

It localises to the cytoplasm. The enzyme catalyses D-glucose 6-phosphate + UDP-alpha-D-glucose = alpha,alpha-trehalose 6-phosphate + UDP + H(+). Functionally, synthase catalytic subunit of the trehalose synthase complex that catalyzes the production of trehalose from glucose-6-phosphate and UDP-alpha-D-glucose in a two step process. Can function independently of the complex. The sequence is that of Alpha,alpha-trehalose-phosphate synthase [UDP-forming] (TPS1) from Encephalitozoon cuniculi (strain GB-M1) (Microsporidian parasite).